The chain runs to 42 residues: Photosystem I reaction center subunit IX (42 aa).

A helical transmembrane segment spans residues 7-27 (YLSAAPVLSTLWLGALAALLI).

The protein belongs to the PsaJ family.

Its subcellular location is the plastid membrane. In terms of biological role, may help in the organization of the PsaE and PsaF subunits. The protein is Photosystem I reaction center subunit IX of Cuscuta reflexa (Southern Asian dodder).